Consider the following 92-residue polypeptide: RNA-binding protein Hfq (92 aa).

The 60-residue stretch at 9–68 folds into the Sm domain; sequence DPFLNALRRERVPVSIYLVNGIKLQGQVESFDQFVILLKNTVSQMVYKHAISTVVPSRPF. Polar residues predominate over residues 73 to 82; sequence HQATNAQAGY. The tract at residues 73 to 92 is disordered; it reads HQATNAQAGYNAQHDDGDEK.

It belongs to the Hfq family. Homohexamer.

Functionally, RNA chaperone that binds small regulatory RNA (sRNAs) and mRNAs to facilitate mRNA translational regulation in response to envelope stress, environmental stress and changes in metabolite concentrations. Also binds with high specificity to tRNAs. This Shewanella pealeana (strain ATCC 700345 / ANG-SQ1) protein is RNA-binding protein Hfq.